Consider the following 468-residue polypeptide: V-type proton ATPase subunit S1 (468 aa).

Positions 1–35 (MMAATAAAQVRAGTRWAPALCRMPWLPLMLVAAAA) are cleaved as a signal peptide. The propeptide occupies 36 to 228 (ATSEQQVPLV…TAVRPSRVAR (193 aa)). Residues 36–417 (ATSEQQVPLV…KKFSYASDCA (382 aa)) are Lumenal-facing. N-linked (GlcNAc...) asparagine glycosylation is found at N167, N258, N271, N294, N301, N348, N355, and N404. Cysteines 369 and 416 form a disulfide. A helical membrane pass occupies residues 418 to 438 (GFFSPGIWMGLLTSLFMLFIF). Over 439 to 468 (TYGLHMILSLKTMDRFDDHKGPTITLTQIV) the chain is Cytoplasmic.

Belongs to the vacuolar ATPase subunit S1 family. Accessory component of the multisubunit proton-transporting vacuolar (V)-ATPase protein pump. Interacts (via N-terminus) with ATP6AP2 (via N-terminus). Interacts with RNASEK. Interacts with TMEM106B (via C-terminus). In terms of processing, N-glycosylated.

It is found in the endoplasmic reticulum membrane. The protein resides in the endoplasmic reticulum-Golgi intermediate compartment membrane. The protein localises to the cytoplasmic vesicle. Its subcellular location is the secretory vesicle. It localises to the synaptic vesicle membrane. It is found in the clathrin-coated vesicle membrane. Functionally, accessory subunit of the proton-transporting vacuolar (V)-ATPase protein pump, which is required for luminal acidification of secretory vesicles. Guides the V-type ATPase into specialized subcellular compartments, such as neuroendocrine regulated secretory vesicles or the ruffled border of the osteoclast, thereby regulating its activity. Involved in membrane trafficking and Ca(2+)-dependent membrane fusion. May play a role in the assembly of the V-type ATPase complex. In aerobic conditions, involved in intracellular iron homeostasis, thus triggering the activity of Fe(2+) prolyl hydroxylase (PHD) enzymes, and leading to HIF1A hydroxylation and subsequent proteasomal degradation. In islets of Langerhans cells, may regulate the acidification of dense-core secretory granules. This is V-type proton ATPase subunit S1 (ATP6AP1) from Bos taurus (Bovine).